The chain runs to 246 residues: Probable chemoreceptor glutamine deamidase CheD (246 aa).

The disordered stretch occupies residues 225–246 (GAGVQPAVQKAASPYAANLSRK).

The protein belongs to the CheD family.

The enzyme catalyses L-glutaminyl-[protein] + H2O = L-glutamyl-[protein] + NH4(+). In terms of biological role, probably deamidates glutamine residues to glutamate on methyl-accepting chemotaxis receptors (MCPs), playing an important role in chemotaxis. This Burkholderia vietnamiensis (strain G4 / LMG 22486) (Burkholderia cepacia (strain R1808)) protein is Probable chemoreceptor glutamine deamidase CheD.